The following is a 284-amino-acid chain: Bifunctional protein FolD (284 aa).

NADP(+) is bound by residues 165 to 167 (GRG), threonine 192, and valine 233.

The protein belongs to the tetrahydrofolate dehydrogenase/cyclohydrolase family. Homodimer.

It catalyses the reaction (6R)-5,10-methylene-5,6,7,8-tetrahydrofolate + NADP(+) = (6R)-5,10-methenyltetrahydrofolate + NADPH. The catalysed reaction is (6R)-5,10-methenyltetrahydrofolate + H2O = (6R)-10-formyltetrahydrofolate + H(+). It participates in one-carbon metabolism; tetrahydrofolate interconversion. Its function is as follows. Catalyzes the oxidation of 5,10-methylenetetrahydrofolate to 5,10-methenyltetrahydrofolate and then the hydrolysis of 5,10-methenyltetrahydrofolate to 10-formyltetrahydrofolate. The chain is Bifunctional protein FolD from Corynebacterium efficiens (strain DSM 44549 / YS-314 / AJ 12310 / JCM 11189 / NBRC 100395).